Consider the following 142-residue polypeptide: UPF0102 protein Bcep18194_A3391 (142 aa).

Residues 1–27 (MCHAAPARPGDGRGLPRAGDNFSGAAR) form a disordered region.

The protein belongs to the UPF0102 family.

The sequence is that of UPF0102 protein Bcep18194_A3391 from Burkholderia lata (strain ATCC 17760 / DSM 23089 / LMG 22485 / NCIMB 9086 / R18194 / 383).